Reading from the N-terminus, the 347-residue chain is MRFSSLIKALQAGESGLRWSQLGQDPDLSGAAALDQALGDQLSFLEAGNVLSASLSDSAVGALLLPDQQDLIDLASQRGIAFAVVSDPRLAFAEALDCLHPRQRPQADIHHTAVIDERAVVGPGTAVAARVCIGAGSRVGADCIVHPGVVIYDDVVIADGCELHANAVLHPGSRLGRRCVVNSNAVVGSEGFGFVPTAKGWRKMPQTGQVVLEDGVEVGCGSTIDRPSVGETRIGAGTKIDNLVQIGHGVSTGRGCAFAAQVGIAGGARIGHGVILAGQVGVANRAVVGDRVMASSKAGIHNDVDAGAVVSGYPAIPHRLWLRCSAAFSKLPELARTVRELKRNTPQ.

Residue H248 is the Proton acceptor of the active site.

Belongs to the transferase hexapeptide repeat family. LpxD subfamily. As to quaternary structure, homotrimer.

The enzyme catalyses a UDP-3-O-[(3R)-3-hydroxyacyl]-alpha-D-glucosamine + a (3R)-hydroxyacyl-[ACP] = a UDP-2-N,3-O-bis[(3R)-3-hydroxyacyl]-alpha-D-glucosamine + holo-[ACP] + H(+). It participates in bacterial outer membrane biogenesis; LPS lipid A biosynthesis. Catalyzes the N-acylation of UDP-3-O-acylglucosamine using 3-hydroxyacyl-ACP as the acyl donor. Is involved in the biosynthesis of lipid A, a phosphorylated glycolipid that anchors the lipopolysaccharide to the outer membrane of the cell. The polypeptide is UDP-3-O-acylglucosamine N-acyltransferase (Parasynechococcus marenigrum (strain WH8102)).